The primary structure comprises 433 residues: Phosphomethylpyrimidine synthase (433 aa).

Substrate is bound by residues Asn-66, Met-94, Tyr-123, His-162, 184-186, 225-228, and Glu-264; these read SRG and DALR. His-268 is a Zn(2+) binding site. Tyr-291 provides a ligand contact to substrate. His-332 serves as a coordination point for Zn(2+). Cys-408, Cys-411, and Cys-415 together coordinate [4Fe-4S] cluster.

This sequence belongs to the ThiC family. [4Fe-4S] cluster serves as cofactor.

The enzyme catalyses 5-amino-1-(5-phospho-beta-D-ribosyl)imidazole + S-adenosyl-L-methionine = 4-amino-2-methyl-5-(phosphooxymethyl)pyrimidine + CO + 5'-deoxyadenosine + formate + L-methionine + 3 H(+). The protein operates within cofactor biosynthesis; thiamine diphosphate biosynthesis. In terms of biological role, catalyzes the synthesis of the hydroxymethylpyrimidine phosphate (HMP-P) moiety of thiamine from aminoimidazole ribotide (AIR) in a radical S-adenosyl-L-methionine (SAM)-dependent reaction. The protein is Phosphomethylpyrimidine synthase of Saccharolobus islandicus (strain M.14.25 / Kamchatka #1) (Sulfolobus islandicus).